The chain runs to 375 residues: Negative elongation factor E (375 aa).

Positions 7 to 36 form a coiled coil; it reads GLSEEEEALQKKFNKLKKKKKALLALKKQS. The tract at residues 30-58 is disordered; it reads LALKKQSSSGPASQGGVKRSLSEQPVVDT. Residue S51 is modified to Phosphoserine. Residue K78 forms a Glycyl lysine isopeptide (Lys-Gly) (interchain with G-Cter in SUMO1); alternate linkage. Residue K78 forms a Glycyl lysine isopeptide (Lys-Gly) (interchain with G-Cter in SUMO2); alternate linkage. Residues 79–262 are disordered; that stretch reads AETKNSGFKR…SDSFPERRAP (184 aa). K82 is covalently cross-linked (Glycyl lysine isopeptide (Lys-Gly) (interchain with G-Cter in SUMO2)). Positions 90 to 101 are enriched in basic and acidic residues; it reads RTLEGKLKDPEK. 2 positions are modified to phosphoserine: S113 and S115. Position 122 is a polyADP-ribosyl glutamic acid (E122). 2 positions are modified to phosphoserine: S131 and S139. The residue at position 151 (E151) is a PolyADP-ribosyl glutamic acid. Residues 155 to 167 are compositionally biased toward low complexity; sequence APGAGDGPPRGFD. E172 carries the polyADP-ribosyl glutamic acid modification. S179, S181, S185, and S187 each carry phosphoserine. A run of 4 repeats spans residues 184 to 185, 186 to 187, 188 to 189, and 190 to 191. A 32 X 2 AA approximate tandem repeats of R-[DSE] region spans residues 184–247; it reads RSRSRDRSHD…RDRDRERDRE (64 aa). Residues 186-260 are compositionally biased toward basic and acidic residues; that stretch reads RSRDRSHDRS…RRSDSFPERR (75 aa). S191 carries the post-translational modification Phosphoserine. A 5; approximate repeat occupies 192 to 193; the sequence is HD. 4 repeat units span residues 194-195, 196-197, 198-199, and 200-201. One copy of the 10; approximate repeat lies at 202–203; it reads KE. 7 repeat units span residues 204–205, 206–207, 208–209, 210–211, 212–213, 214–215, and 216–217. An 18; approximate repeat occupies 218–219; the sequence is KD. The 19; approximate repeat unit spans residues 220-221; that stretch reads KD. Repeat copies occupy residues 222-223, 224-225, 226-227, and 228-229. One copy of the 24; approximate repeat lies at 230–231; that stretch reads KE. 8 repeat units span residues 232 to 233, 234 to 235, 236 to 237, 238 to 239, 240 to 241, 242 to 243, 244 to 245, and 246 to 247. A phosphoserine mark is found at S253 and S255. An RRM domain is found at 266–336; sequence NTLYVYGEDM…VQLKVNIARK (71 aa). Phosphothreonine occurs at positions 276 and 278. S285 and S357 each carry phosphoserine.

It belongs to the RRM NELF-E family. In terms of assembly, the NELF complex is composed of NELFA, NELFB, NELFCD and NELFE. Interacts with NELFB. In terms of processing, phosphorylated by the P-TEFb complex at sites next to its RNA recognition motif, promoting its release from chromatin. Post-translationally, sumoylated. Poly-ADP-ribosylated by PARP1, thereby preventing RNA-binding and relieving transcription pausing.

It localises to the nucleus. The protein localises to the chromosome. In terms of biological role, essential component of the NELF complex, a complex that negatively regulates the elongation of transcription by RNA polymerase II. The NELF complex, which acts via an association with the DSIF complex and causes transcriptional pausing, is counteracted by the P-TEFb kinase complex. Provides the strongest RNA binding activity of the NELF complex and may initially recruit the NELF complex to RNA. In Mus musculus (Mouse), this protein is Negative elongation factor E (Nelfe).